We begin with the raw amino-acid sequence, 427 residues long: Enolase (427 aa).

Q162 serves as a coordination point for (2R)-2-phosphoglycerate. Catalysis depends on E204, which acts as the Proton donor. Mg(2+) contacts are provided by D241, E283, and D310. The (2R)-2-phosphoglycerate site is built by K335, R364, S365, and K386. Residue K335 is the Proton acceptor of the active site.

It belongs to the enolase family. Requires Mg(2+) as cofactor.

It is found in the cytoplasm. The protein localises to the secreted. Its subcellular location is the cell surface. The enzyme catalyses (2R)-2-phosphoglycerate = phosphoenolpyruvate + H2O. It participates in carbohydrate degradation; glycolysis; pyruvate from D-glyceraldehyde 3-phosphate: step 4/5. In terms of biological role, catalyzes the reversible conversion of 2-phosphoglycerate (2-PG) into phosphoenolpyruvate (PEP). It is essential for the degradation of carbohydrates via glycolysis. The polypeptide is Enolase (Mycolicibacterium smegmatis (strain ATCC 700084 / mc(2)155) (Mycobacterium smegmatis)).